Consider the following 618-residue polypeptide: DNA mismatch repair protein MutL (618 aa).

It belongs to the DNA mismatch repair MutL/HexB family.

Its function is as follows. This protein is involved in the repair of mismatches in DNA. It is required for dam-dependent methyl-directed DNA mismatch repair. May act as a 'molecular matchmaker', a protein that promotes the formation of a stable complex between two or more DNA-binding proteins in an ATP-dependent manner without itself being part of a final effector complex. This is DNA mismatch repair protein MutL from Porphyromonas gingivalis (strain ATCC 33277 / DSM 20709 / CIP 103683 / JCM 12257 / NCTC 11834 / 2561).